A 251-amino-acid polypeptide reads, in one-letter code: Ubiquinone/menaquinone biosynthesis C-methyltransferase UbiE (251 aa).

S-adenosyl-L-methionine is bound by residues T74, D92, and S132.

Belongs to the class I-like SAM-binding methyltransferase superfamily. MenG/UbiE family.

It carries out the reaction a 2-demethylmenaquinol + S-adenosyl-L-methionine = a menaquinol + S-adenosyl-L-homocysteine + H(+). It catalyses the reaction a 2-methoxy-6-(all-trans-polyprenyl)benzene-1,4-diol + S-adenosyl-L-methionine = a 5-methoxy-2-methyl-3-(all-trans-polyprenyl)benzene-1,4-diol + S-adenosyl-L-homocysteine + H(+). It functions in the pathway quinol/quinone metabolism; menaquinone biosynthesis; menaquinol from 1,4-dihydroxy-2-naphthoate: step 2/2. The protein operates within cofactor biosynthesis; ubiquinone biosynthesis. Its function is as follows. Methyltransferase required for the conversion of demethylmenaquinol (DMKH2) to menaquinol (MKH2) and the conversion of 2-polyprenyl-6-methoxy-1,4-benzoquinol (DDMQH2) to 2-polyprenyl-3-methyl-6-methoxy-1,4-benzoquinol (DMQH2). The sequence is that of Ubiquinone/menaquinone biosynthesis C-methyltransferase UbiE from Rubrivivax gelatinosus (strain NBRC 100245 / IL144).